The chain runs to 396 residues: Phosphoglycerate kinase (396 aa).

Substrate contacts are provided by residues Asp21 to Asn23, Arg36, His59 to Arg62, Arg113, and Arg146. ATP is bound by residues Lys197, Glu319, and Gly345–Thr348.

Belongs to the phosphoglycerate kinase family. As to quaternary structure, monomer.

It localises to the cytoplasm. It catalyses the reaction (2R)-3-phosphoglycerate + ATP = (2R)-3-phospho-glyceroyl phosphate + ADP. It functions in the pathway carbohydrate degradation; glycolysis; pyruvate from D-glyceraldehyde 3-phosphate: step 2/5. This chain is Phosphoglycerate kinase, found in Legionella pneumophila (strain Corby).